The sequence spans 200 residues: MAKFIQHIGLVAPLDAANVDTDAIIPKQFLQKVTRTGFGQHLFNDWRFLDDASKVPNPDFVLNLPRYQGATILLARENFGCGSSREHAPWALTDFGFKVVIAPSFADIFYGNAFNNQLLPVTLSEADIDTLFQLVKENEGIEFVVDLEQQTVNAGGKSYAFEIDPFRRHCMINGLDSIGLTLQHEHNISAYEKQQPEFLR.

Belongs to the LeuD family. LeuD type 1 subfamily. Heterodimer of LeuC and LeuD.

It carries out the reaction (2R,3S)-3-isopropylmalate = (2S)-2-isopropylmalate. It functions in the pathway amino-acid biosynthesis; L-leucine biosynthesis; L-leucine from 3-methyl-2-oxobutanoate: step 2/4. Functionally, catalyzes the isomerization between 2-isopropylmalate and 3-isopropylmalate, via the formation of 2-isopropylmaleate. This chain is 3-isopropylmalate dehydratase small subunit, found in Yersinia pestis bv. Antiqua (strain Antiqua).